Here is a 473-residue protein sequence, read N- to C-terminus: H(+)/Cl(-) exchange transporter ClcA (473 aa).

Over 1–32 (MKTDTSTFLAQQIVRLRRRDQIRRLMQRDKTP) the chain is Cytoplasmic. A helical transmembrane segment spans residues 33 to 69 (LAILFMAAVVGTLTGLVGVAFEKAVSWVQNMRIGALV). Residues 70-76 (QVADHAF) lie on the Periplasmic side of the membrane. A helical transmembrane segment spans residues 77–100 (LLWPLAFILSALLAMVGYFLVRKF). The short motif at 106–110 (GSGIP) is the Selectivity filter part_1 element. A chloride-binding site is contributed by serine 107. An intramembrane region (helical) is located at residues 109–116 (IPEIEGAL). Topologically, residues 117–123 (EELRPVR) are cytoplasmic. The next 2 helical transmembrane spans lie at 124–141 (WWRV…TLGA) and 148–166 (EGPT…LDVF). A Selectivity filter part_2 motif is present at residues 146-150 (GREGP). Topologically, residues 167 to 176 (RMRSAEARHT) are cytoplasmic. Intramembrane regions (helical) lie at residues 177-189 (LLAT…LSAA) and 193-201 (PLAGILFII). The Cytoplasmic portion of the chain corresponds to 202-214 (EEMRPQFRYNLIS). The helical transmembrane segment at 215–232 (IKAVFTGVIMSSIVFRIF) threads the bilayer. Topologically, residues 233 to 252 (NGEAPIIEVGKLSDAPVNTL) are periplasmic. The chain crosses the membrane as a helical span at residues 253 to 281 (WLYLILGIIFGCVGPVFNSLVLRTQDMFQ). The Cytoplasmic portion of the chain corresponds to 282-287 (RFHGGE). Residues 288–309 (IKKWVLMGGAIGGLCGILGLIE) traverse the membrane as a helical segment. Residues 310–329 (PEAAGGGFNLIPIAAAGNFS) are Periplasmic-facing. 2 helical membrane passes run 330 to 349 (VGLL…LCFS) and 355 to 376 (GIFA…MAAA). Residues 355-359 (GIFAP) carry the Selectivity filter part_3 motif. The chloride site is built by isoleucine 356 and phenylalanine 357. Over 377 to 386 (VLFPQYHLEA) the chain is Periplasmic. The segment at residues 387-401 (GTFAIAGMGALMAAS) is an intramembrane region (helical). The note=Loop between two helices intramembrane region spans 402–404 (VRA). Residues 405–416 (PLTGIVLVLEMT) constitute an intramembrane region (helical). An intramembrane region (note=Loop between two helices) is located at residues 417 to 421 (DNYQL). The helical transmembrane segment at 422-438 (ILPMIITCLGATLLAQF) threads the bilayer. Residues 439-473 (LGGKPLYSTILARTLAKQDAEQAAKNQNASAGENT) lie on the Cytoplasmic side of the membrane. Tyrosine 445 is a chloride binding site.

The protein belongs to the chloride channel (TC 2.A.49) family. ClcA subfamily. In terms of assembly, homodimer.

Its subcellular location is the cell inner membrane. The catalysed reaction is 2 chloride(in) + H(+)(out) = 2 chloride(out) + H(+)(in). Functionally, proton-coupled chloride transporter. Functions as antiport system and exchanges two chloride ions for 1 proton. Probably acts as an electrical shunt for an outwardly-directed proton pump that is linked to amino acid decarboxylation, as part of the extreme acid resistance (XAR) response. The protein is H(+)/Cl(-) exchange transporter ClcA of Salmonella choleraesuis (strain SC-B67).